The chain runs to 497 residues: Probable polyamine oxidase 4 (497 aa).

Residues glutamate 58, arginine 66, valine 247, and glutamate 435 each coordinate FAD. The Microbody targeting signal motif lies at 495 to 497 (SRM).

This sequence belongs to the flavin monoamine oxidase family. It depends on FAD as a cofactor. As to expression, highly expressed in roots, flowers and greening cotelydons. Lower expression in other tissues.

It localises to the peroxisome. The enzyme catalyses spermine + O2 + H2O = 3-aminopropanal + spermidine + H2O2. It catalyses the reaction spermidine + O2 + H2O = 3-aminopropanal + putrescine + H2O2. It participates in amine and polyamine degradation; spermine degradation. The protein operates within amine and polyamine degradation; spermidine degradation. Its function is as follows. Flavoenzyme involved in polyamine back-conversion. Catalyzes the oxidation of the secondary amino group of polyamines, such as spermine and spermidine. Substrate preference is spermine &gt; spermidine. No activity detected when putrescine or N(1)-acetylspermine are used as substrates. Plays an important role in the regulation of polyamine intracellular concentration. This chain is Probable polyamine oxidase 4 (PAO4), found in Arabidopsis thaliana (Mouse-ear cress).